Reading from the N-terminus, the 462-residue chain is GTPase Der (462 aa).

2 consecutive EngA-type G domains span residues 9 to 171 and 201 to 372; these read KTIA…GLTK and IQVG…ECFS. GTP contacts are provided by residues 15–22, 62–66, 123–126, 207–214, 254–258, and 318–321; these read GQPNVGKS, DTGGM, NKID, GRVNVGKS, DTAGI, and NKWD. The 85-residue stretch at 373-457 folds into the KH-like domain; it reads KRIPTSLLNS…PLIINAKDKK (85 aa).

Belongs to the TRAFAC class TrmE-Era-EngA-EngB-Septin-like GTPase superfamily. EngA (Der) GTPase family. In terms of assembly, associates with the 50S ribosomal subunit.

Its function is as follows. GTPase that plays an essential role in the late steps of ribosome biogenesis. This chain is GTPase Der, found in Helicobacter acinonychis (strain Sheeba).